We begin with the raw amino-acid sequence, 198 residues long: Recombination protein RecR (198 aa).

The segment at Cys57–Cys72 adopts a C4-type zinc-finger fold. Residues Gly80 to Pro175 enclose the Toprim domain.

It belongs to the RecR family.

In terms of biological role, may play a role in DNA repair. It seems to be involved in an RecBC-independent recombinational process of DNA repair. It may act with RecF and RecO. The protein is Recombination protein RecR of Desulforudis audaxviator (strain MP104C).